The chain runs to 215 residues: MKPFVIAIDGPAASGKGTLARKIAAHYHLHHLDTGLTYRGVAYALLQHNLALDDEKNAITYAKELDFNTLNLAFLSSHELGEAASKIALNPTIRKILVEKQRNFAKTLPGSVLDGRDIGTIVCPDADIKFYILANVQTRAKRRYQEILKKGGQANYHEILNDLEQRDSRDITRKESPLKPAENAHLLDTSELSIEATFAIACSFIDPIIKMHIIG.

10–18 (GPAASGKGT) contacts ATP.

It belongs to the cytidylate kinase family. Type 1 subfamily.

It localises to the cytoplasm. The catalysed reaction is CMP + ATP = CDP + ADP. It carries out the reaction dCMP + ATP = dCDP + ADP. The polypeptide is Cytidylate kinase (Bartonella tribocorum (strain CIP 105476 / IBS 506)).